The primary structure comprises 271 residues: Autophagy-related protein 27 (271 aa).

The signal sequence occupies residues 1 to 19 (MVSKTWICGFISIITVVQA). The 147-residue stretch at 20–166 (LSCEKHDVLK…TLKGPSGCLK (147 aa)) folds into the MRH domain. Over 20 to 199 (LSCEKHDVLK…PAKKAGGTSW (180 aa)) the chain is Lumenal. Disulfide bonds link Cys22–Cys60, Cys71–Cys78, and Cys135–Cys164. The interval 161 to 194 (PSGCLKSKDDDKKNGDGDNGKDGDSEGKKPAKKA) is disordered. Over residues 166 to 189 (KSKDDDKKNGDGDNGKDGDSEGKK) the composition is skewed to basic and acidic residues. A helical membrane pass occupies residues 200 to 220 (FTWLFLYALLFTLIYLMVVSF). Residues 221-271 (LNTRGGSFQDFRAEFIQRSTQFLTSLPEFCKEVVSRILGRSTAQRGGYSAV) lie on the Cytoplasmic side of the membrane.

Belongs to the ATG27 family. Forms a complex with ATG9 and ATG23.

It is found in the cytoplasmic vesicle membrane. The protein localises to the golgi apparatus membrane. It localises to the mitochondrion membrane. The protein resides in the preautophagosomal structure membrane. Its function is as follows. Effector of VPS34 phosphatidylinositol 3-phosphate kinase signaling. Regulates the cytoplasm to vacuole transport (Cvt) vesicle formation. Plays a role in ATG protein retrieval from the pre-autophagosomal structure (PAS) and is especially required for autophagy-dependent cycling of ATG9. This Saccharomyces cerevisiae (strain ATCC 204508 / S288c) (Baker's yeast) protein is Autophagy-related protein 27 (ATG27).